Consider the following 422-residue polypeptide: Glutamyl-tRNA reductase (422 aa).

Residues 49–52, Ser-110, 115–117, and Gln-121 each bind substrate; these read TCNR and EPQ. Cys-50 acts as the Nucleophile in catalysis. 190–195 lines the NADP(+) pocket; it reads GAGETI.

It belongs to the glutamyl-tRNA reductase family. In terms of assembly, homodimer.

It catalyses the reaction (S)-4-amino-5-oxopentanoate + tRNA(Glu) + NADP(+) = L-glutamyl-tRNA(Glu) + NADPH + H(+). Its pathway is porphyrin-containing compound metabolism; protoporphyrin-IX biosynthesis; 5-aminolevulinate from L-glutamyl-tRNA(Glu): step 1/2. Functionally, catalyzes the NADPH-dependent reduction of glutamyl-tRNA(Glu) to glutamate 1-semialdehyde (GSA). The chain is Glutamyl-tRNA reductase from Colwellia psychrerythraea (strain 34H / ATCC BAA-681) (Vibrio psychroerythus).